A 348-amino-acid polypeptide reads, in one-letter code: Sulfate/thiosulfate import ATP-binding protein CysA (348 aa).

The region spanning 3–237 (IRIQELCKQF…PSSPFVYSFV (235 aa)) is the ABC transporter domain. Residue 35–42 (GPSGSGKT) coordinates ATP.

This sequence belongs to the ABC transporter superfamily. Sulfate/tungstate importer (TC 3.A.1.6) family. The complex is composed of two ATP-binding proteins (CysA), two transmembrane proteins (CysT and CysW) and a solute-binding protein (CysP).

It localises to the cell inner membrane. It carries out the reaction sulfate(out) + ATP + H2O = sulfate(in) + ADP + phosphate + H(+). The enzyme catalyses thiosulfate(out) + ATP + H2O = thiosulfate(in) + ADP + phosphate + H(+). Its function is as follows. Part of the ABC transporter complex CysAWTP involved in sulfate/thiosulfate import. Responsible for energy coupling to the transport system. In Xylella fastidiosa (strain 9a5c), this protein is Sulfate/thiosulfate import ATP-binding protein CysA.